A 174-amino-acid chain; its full sequence is Large ribosomal subunit protein uL10 (174 aa).

This sequence belongs to the universal ribosomal protein uL10 family. As to quaternary structure, part of the ribosomal stalk of the 50S ribosomal subunit. The N-terminus interacts with L11 and the large rRNA to form the base of the stalk. The C-terminus forms an elongated spine to which L12 dimers bind in a sequential fashion forming a multimeric L10(L12)X complex.

Functionally, forms part of the ribosomal stalk, playing a central role in the interaction of the ribosome with GTP-bound translation factors. The polypeptide is Large ribosomal subunit protein uL10 (Syntrophus aciditrophicus (strain SB)).